Reading from the N-terminus, the 233-residue chain is ATP synthase subunit a 2 (233 aa).

Transmembrane regions (helical) follow at residues 15–35 (FVVINATLVYTWLTMALLVIG), 78–98 (YLAFVGTLFLFILTANLLTVV), 107–127 (SLSTTTALAIAVFIAVPIYGI), 169–189 (IMSGNLLAAILLALVPLFVPV), and 194–214 (LGLVFGVIQAYVFAILALVYI).

This sequence belongs to the ATPase A chain family. In terms of assembly, F-type ATPases have 2 components, CF(1) - the catalytic core - and CF(0) - the membrane proton channel. CF(1) has five subunits: alpha(3), beta(3), gamma(1), delta(1), epsilon(1). CF(0) has four main subunits: a, b, b' and c.

Its subcellular location is the cellular thylakoid membrane. Its function is as follows. Key component of the proton channel; it plays a direct role in the translocation of protons across the membrane. The polypeptide is ATP synthase subunit a 2 (Picosynechococcus sp. (strain ATCC 27264 / PCC 7002 / PR-6) (Agmenellum quadruplicatum)).